We begin with the raw amino-acid sequence, 464 residues long: Asparagine--tRNA ligase (464 aa).

The protein belongs to the class-II aminoacyl-tRNA synthetase family. Homodimer.

The protein localises to the cytoplasm. It catalyses the reaction tRNA(Asn) + L-asparagine + ATP = L-asparaginyl-tRNA(Asn) + AMP + diphosphate + H(+). The polypeptide is Asparagine--tRNA ligase (Clostridium botulinum (strain Eklund 17B / Type B)).